The sequence spans 238 residues: ATP synthase subunit a (238 aa).

A run of 5 helical transmembrane segments spans residues 18–38, 76–96, 114–134, 166–186, and 193–213; these read LTLLAVCIVTILLIFGFVFWA, YSLLLFTIFLFVAVANNLGLF, NLAFDLALSLFVTLLVHIEGI, SLAIRLFGNIFAGEVVTGLIV, and LYWWPIAFLVNIAWTAFSIFI.

This sequence belongs to the ATPase A chain family. As to quaternary structure, F-type ATPases have 2 components, CF(1) - the catalytic core - and CF(0) - the membrane proton channel. CF(1) has five subunits: alpha(3), beta(3), gamma(1), delta(1), epsilon(1). CF(0) has three main subunits: a(1), b(2) and c(9-12). The alpha and beta chains form an alternating ring which encloses part of the gamma chain. CF(1) is attached to CF(0) by a central stalk formed by the gamma and epsilon chains, while a peripheral stalk is formed by the delta and b chains.

It localises to the cell membrane. Key component of the proton channel; it plays a direct role in the translocation of protons across the membrane. This Streptococcus equi subsp. zooepidemicus (strain H70) protein is ATP synthase subunit a.